Consider the following 116-residue polypeptide: Large ribosomal subunit protein bL17 (116 aa).

Belongs to the bacterial ribosomal protein bL17 family. Part of the 50S ribosomal subunit. Contacts protein L32.

This is Large ribosomal subunit protein bL17 from Sulfurimonas denitrificans (strain ATCC 33889 / DSM 1251) (Thiomicrospira denitrificans (strain ATCC 33889 / DSM 1251)).